The primary structure comprises 397 residues: Elongation factor Tu (397 aa).

A tr-type G domain is found at 10-206 (KPHVNIGTIG…HIDTYIPEPT (197 aa)). The interval 19–26 (GHVDHGKT) is G1. 19-26 (GHVDHGKT) contributes to the GTP binding site. Thr-26 contributes to the Mg(2+) binding site. Residues 61–65 (GITIS) form a G2 region. Residues 82–85 (DCPG) are G3. GTP is bound by residues 82–86 (DCPGH) and 137–140 (NKCD). Positions 137-140 (NKCD) are G4. The G5 stretch occupies residues 175-177 (SAL).

Belongs to the TRAFAC class translation factor GTPase superfamily. Classic translation factor GTPase family. EF-Tu/EF-1A subfamily. As to quaternary structure, monomer.

It is found in the cytoplasm. It carries out the reaction GTP + H2O = GDP + phosphate + H(+). Its function is as follows. GTP hydrolase that promotes the GTP-dependent binding of aminoacyl-tRNA to the A-site of ribosomes during protein biosynthesis. In Alkaliphilus oremlandii (strain OhILAs) (Clostridium oremlandii (strain OhILAs)), this protein is Elongation factor Tu.